Consider the following 154-residue polypeptide: Protein X (154 aa).

The mitochondrial targeting sequence stretch occupies residues Pro-68 to Phe-117.

The protein belongs to the orthohepadnavirus protein X family. May form homodimer. May interact with host CEBPA, CFLAR, CREB1, DDB1, E4F1, HBXIP, HSPD1/HSP60, NFKBIA, POLR2E and SMAD4. Interacts with host SMC5-SMC6 complex and induces its degradation. Interacts with host TRPC4AP; leading to prevent ubiquitination of TRPC4AP. Interacts with host PLSCR1; this interaction promotes ubiquitination and degradation of HBx and impairs HBx-mediated cell proliferation. Post-translationally, a fraction may be phosphorylated in insect cells and HepG2 cells, a human hepatoblastoma cell line. Phosphorylated in vitro by host protein kinase C or mitogen-activated protein kinase. N-acetylated in insect cells.

It localises to the host cytoplasm. Its subcellular location is the host nucleus. The protein localises to the host mitochondrion. Its function is as follows. Multifunctional protein that plays a role in silencing host antiviral defenses and promoting viral transcription. Does not seem to be essential for HBV infection. May be directly involved in development of cirrhosis and liver cancer (hepatocellular carcinoma). Most of cytosolic activities involve modulation of cytosolic calcium. The effect on apoptosis is controversial depending on the cell types in which the studies have been conducted. May induce apoptosis by localizing in mitochondria and causing loss of mitochondrial membrane potential. May also modulate apoptosis by binding host CFLAR, a key regulator of the death-inducing signaling complex (DISC). Promotes viral transcription by using the host E3 ubiquitin ligase DDB1 to target the SMC5-SMC6 complex to proteasomal degradation. This host complex would otherwise bind to viral episomal DNA, and prevents its transcription. Moderately stimulates transcription of many different viral and cellular transcription elements. Promoters and enhancers stimulated by HBx contain DNA binding sites for NF-kappa-B, AP-1, AP-2, c-EBP, ATF/CREB, or the calcium-activated factor NF-AT. The protein is Protein X of Homo sapiens (Human).